The chain runs to 91 residues: uncharacterized protein (91 aa).

It belongs to the FrmR/RcnR family.

The protein resides in the cytoplasm. This is an uncharacterized protein from Serratia marcescens.